We begin with the raw amino-acid sequence, 235 residues long: MELATELKEGILLIDKPQGRTSFSLIRTLTKLIGVKKIGHAGTLDPFATGVMVMLIGRRFTRLSDVLLFEDKEYAAVAHLGTTTDSYDCDGKIVGRSKKIPTYEEILEASQYFQGEIQQIPPMFSAKKVNGKKLYEYARKGLSIERRQSTVQVSLQITKYEYPLLHFSIQCSKGTYIRSIAHELGNMLGCGAYLEELRRLRSGSFSIDQCIDGCLLDCPDFDISPYLRDFNGNML.

Asp-45 acts as the Nucleophile in catalysis.

It belongs to the pseudouridine synthase TruB family. Type 1 subfamily.

It carries out the reaction uridine(55) in tRNA = pseudouridine(55) in tRNA. Functionally, responsible for synthesis of pseudouridine from uracil-55 in the psi GC loop of transfer RNAs. This chain is tRNA pseudouridine synthase B, found in Chlamydia abortus (strain DSM 27085 / S26/3) (Chlamydophila abortus).